Here is a 628-residue protein sequence, read N- to C-terminus: Monoterpene synthase like 1, chloroplastic (628 aa).

Mg(2+) contacts are provided by aspartate 379, aspartate 383, and aspartate 531. The short motif at 379–383 (DDIYD) is the DDXXD motif element.

Belongs to the terpene synthase family. Tpsd subfamily. Requires Mg(2+) as cofactor. The cofactor is Mn(2+).

It localises to the plastid. Its subcellular location is the chloroplast. The protein operates within terpene metabolism; oleoresin biosynthesis. It participates in secondary metabolite biosynthesis; terpenoid biosynthesis. Its function is as follows. Monoterpene synthase (TPS) involved in the biosynthesis of monoterpene natural products included in conifer oleoresin secretions and volatile emissions; these compounds contribute to biotic and abiotic stress defense against herbivores and pathogens. The chain is Monoterpene synthase like 1, chloroplastic from Pinus banksiana (Jack pine).